Reading from the N-terminus, the 732-residue chain is Acylamino-acid-releasing enzyme (732 aa).

Residue Met1 is modified to N-acetylmethionine. Ser185 and Ser187 each carry phosphoserine. Active-site charge relay system residues include Ser587, Asp675, and His707.

It belongs to the peptidase S9C family. As to quaternary structure, homotetramer.

It localises to the cytoplasm. It catalyses the reaction Cleavage of an N-acetyl or N-formyl amino acid from the N-terminus of a polypeptide.. With respect to regulation, homotetramerization is required for activity. Tetramerization results in the formation of a gated channel which is involved in substrate selection and substrate access to the catalytic sites. In terms of biological role, this enzyme catalyzes the hydrolysis of the N-terminal peptide bond of an N-acetylated peptide to generate an N-acetylated amino acid and a peptide with a free N-terminus. It preferentially cleaves off Ac-Ala, Ac-Met and Ac-Ser. Also, involved in the degradation of oxidized and glycated proteins. In Mus musculus (Mouse), this protein is Acylamino-acid-releasing enzyme (Apeh).